We begin with the raw amino-acid sequence, 246 residues long: Zorya protein ZorB (246 aa).

Residues 20-40 (FWISYADLMTAMMVLFLVVMV) form a helical membrane-spanning segment. Positions 86-218 (CHDNRISFGE…RVELRMQFFG (133 aa)) constitute an OmpA-like domain.

This sequence belongs to the MotB family.

It localises to the cell inner membrane. Functionally, component of antiviral defense system Zorya type I, composed of ZorA, ZorB, ZorC and ZorD. Expression of Zorya type I in E.coli (strain MG1655) confers 10,000-fold resistance to phage SECphi27, 100-fold resistance to lambda, and 10-fold resistance to T7. While most T7 infected Zorya-containing cells undergo abortive infection, a minority produce viable phage progeny. These eventually accumulate to a high multiplicity of infection, leading to culture collapse by 2 hours after initial infection. ZorA and ZorB probably assemble in the cell inner membrane and exert their effect there. The protein is Zorya protein ZorB of Escherichia coli O139:H28 (strain E24377A / ETEC).